The sequence spans 343 residues: Uroporphyrinogen decarboxylase (343 aa).

Substrate is bound by residues 23 to 27 (RQAGR), aspartate 73, tyrosine 151, serine 206, and histidine 319.

It belongs to the uroporphyrinogen decarboxylase family. Homodimer.

The protein localises to the cytoplasm. The enzyme catalyses uroporphyrinogen III + 4 H(+) = coproporphyrinogen III + 4 CO2. It functions in the pathway porphyrin-containing compound metabolism; protoporphyrin-IX biosynthesis; coproporphyrinogen-III from 5-aminolevulinate: step 4/4. Functionally, catalyzes the decarboxylation of four acetate groups of uroporphyrinogen-III to yield coproporphyrinogen-III. The polypeptide is Uroporphyrinogen decarboxylase (Sulfurimonas denitrificans (strain ATCC 33889 / DSM 1251) (Thiomicrospira denitrificans (strain ATCC 33889 / DSM 1251))).